Here is a 482-residue protein sequence, read N- to C-terminus: Anaerobic nitric oxide reductase flavorubredoxin (482 aa).

A zinc metallo-hydrolase region spans residues Leu-30–Ile-210. Fe cation-binding residues include His-79, Glu-81, Asp-83, His-147, Asp-166, and His-227. The Flavodoxin-like domain maps to Ile-254–Ala-393. FMN is bound by residues Thr-260–Asn-264 and Ala-342–Met-369. One can recognise a Rubredoxin-like domain in the interval Gly-426–Leu-477. 4 residues coordinate Fe cation: Cys-431, Cys-434, Cys-464, and Cys-467.

In the N-terminal section; belongs to the zinc metallo-hydrolase group 3 family. In terms of assembly, homotetramer. Fe cation serves as cofactor. It depends on FMN as a cofactor.

It localises to the cytoplasm. It participates in nitrogen metabolism; nitric oxide reduction. Functionally, anaerobic nitric oxide reductase; uses NADH to detoxify nitric oxide (NO), protecting several 4Fe-4S NO-sensitive enzymes. Has at least 2 reductase partners, only one of which (NorW, flavorubredoxin reductase) has been identified. NO probably binds to the di-iron center; electrons enter from the NorW at rubredoxin and are transferred sequentially to the FMN center and the di-iron center. Also able to function as an aerobic oxygen reductase. The chain is Anaerobic nitric oxide reductase flavorubredoxin from Enterobacter sp. (strain 638).